Reading from the N-terminus, the 472-residue chain is ATP-dependent protease ATPase subunit HslU (472 aa).

ATP is bound by residues Ile-20, 62 to 67 (GVGKTE), Asp-285, Glu-350, and Arg-422.

It belongs to the ClpX chaperone family. HslU subfamily. A double ring-shaped homohexamer of HslV is capped on each side by a ring-shaped HslU homohexamer. The assembly of the HslU/HslV complex is dependent on binding of ATP.

The protein resides in the cytoplasm. Functionally, ATPase subunit of a proteasome-like degradation complex; this subunit has chaperone activity. The binding of ATP and its subsequent hydrolysis by HslU are essential for unfolding of protein substrates subsequently hydrolyzed by HslV. HslU recognizes the N-terminal part of its protein substrates and unfolds these before they are guided to HslV for hydrolysis. The sequence is that of ATP-dependent protease ATPase subunit HslU from Lactiplantibacillus plantarum (strain ATCC BAA-793 / NCIMB 8826 / WCFS1) (Lactobacillus plantarum).